We begin with the raw amino-acid sequence, 384 residues long: Helix-loop-helix protein delilah (384 aa).

Disordered regions lie at residues 1-101 and 187-227; these read MKSN…TANA and EEAE…KIVP. Over residues 75–86 the composition is skewed to basic residues; that stretch reads KSRKNAPTKSKT. One can recognise a bHLH domain in the interval 94–153; sequence YRRKTANARERTRMREINTAFETLRHCVPEAIKGEDAANTNEKLTKITTLRLAMKYITML. Residues 209–224 are compositionally biased toward low complexity; that stretch reads KKSSAASKRQSQKQAK.

In terms of assembly, efficient DNA binding requires dimerization with another bHLH protein, possibly with da. As to expression, expressed almost exclusively in the attachments sites of the somatic muscles to tendon cells in the epidermis.

It localises to the nucleus. Probably plays an important role in the differentiation of epidermal cells into the tendon cells that form the attachment sites for all muscles. The protein is Helix-loop-helix protein delilah (tx) of Drosophila melanogaster (Fruit fly).